We begin with the raw amino-acid sequence, 173 residues long: Regulator of ribonuclease activity A (173 aa).

Belongs to the RraA family. In terms of assembly, homotrimer. Binds to both RNA-binding sites in the C-terminal region of Rne and to RhlB.

The protein resides in the cytoplasm. Its function is as follows. Globally modulates RNA abundance by binding to RNase E (Rne) and regulating its endonucleolytic activity. Can modulate Rne action in a substrate-dependent manner by altering the composition of the degradosome. Modulates RNA-binding and helicase activities of the degradosome. This Vibrio vulnificus (strain CMCP6) protein is Regulator of ribonuclease activity A.